The following is a 342-amino-acid chain: Glycerol-1-phosphate dehydrogenase [NAD(P)+] (342 aa).

NAD(+) contacts are provided by residues 84–88 (GRPLD) and 106–109 (TSAS). Asp-111 lines the substrate pocket. Ser-115 is an NAD(+) binding site. Position 160 (Asp-160) interacts with substrate. The Zn(2+) site is built by Asp-160 and His-241. Residue His-245 coordinates substrate. His-260 contacts Zn(2+).

This sequence belongs to the glycerol-1-phosphate dehydrogenase family. In terms of assembly, homodimer. Zn(2+) serves as cofactor.

It is found in the cytoplasm. The catalysed reaction is sn-glycerol 1-phosphate + NAD(+) = dihydroxyacetone phosphate + NADH + H(+). It carries out the reaction sn-glycerol 1-phosphate + NADP(+) = dihydroxyacetone phosphate + NADPH + H(+). Its pathway is membrane lipid metabolism; glycerophospholipid metabolism. Its function is as follows. Catalyzes the NAD(P)H-dependent reduction of dihydroxyacetonephosphate (DHAP or glycerone phosphate) to glycerol 1-phosphate (G1P). The G1P thus generated is used as the glycerophosphate backbone of phospholipids in the cellular membranes of Archaea. This is Glycerol-1-phosphate dehydrogenase [NAD(P)+] from Pyrobaculum neutrophilum (strain DSM 2338 / JCM 9278 / NBRC 100436 / V24Sta) (Thermoproteus neutrophilus).